Here is a 220-residue protein sequence, read N- to C-terminus: Uracil-DNA glycosylase 2 (220 aa).

The active-site Proton acceptor is the aspartate 65.

Belongs to the uracil-DNA glycosylase (UDG) superfamily. UNG family.

It localises to the cytoplasm. The enzyme catalyses Hydrolyzes single-stranded DNA or mismatched double-stranded DNA and polynucleotides, releasing free uracil.. In terms of biological role, excises uracil residues from the DNA which can arise as a result of misincorporation of dUMP residues by DNA polymerase or due to deamination of cytosine. This chain is Uracil-DNA glycosylase 2, found in Bacteroides fragilis (strain ATCC 25285 / DSM 2151 / CCUG 4856 / JCM 11019 / LMG 10263 / NCTC 9343 / Onslow / VPI 2553 / EN-2).